Here is a 747-residue protein sequence, read N- to C-terminus: Myotubularin-related protein 12 (747 aa).

Residues Phe-205–Tyr-643 form the Myotubularin phosphatase domain. Residues Val-449–Lys-558 form an interaction with MTM1 region. Residues Asp-548–Lys-575 form a disordered region. Polar residues predominate over residues Gln-562–Ser-572. Phosphoserine occurs at positions 564 and 601.

This sequence belongs to the protein-tyrosine phosphatase family. Non-receptor class myotubularin subfamily. As to quaternary structure, heterodimer with lipid phosphatase MTM1. Heterodimer with lipid phosphatase MTMR2. Expressed in skeletal muscles (at protein level).

The protein resides in the cytoplasm. Its subcellular location is the sarcoplasmic reticulum. It localises to the myofibril. The protein localises to the sarcomere. Functionally, acts as an adapter for the myotubularin-related phosphatases. Regulates phosphatase MTM1 protein stability and possibly its intracellular location. By stabilizing MTM1 protein levels, required for skeletal muscle maintenance but not for myogenesis. In Mus musculus (Mouse), this protein is Myotubularin-related protein 12 (Mtmr12).